Consider the following 163-residue polypeptide: NAD(P)H-quinone oxidoreductase subunit I, chloroplastic (163 aa).

4Fe-4S ferredoxin-type domains are found at residues Gly-55–Arg-84 and Leu-95–Glu-124. [4Fe-4S] cluster is bound by residues Cys-64, Cys-67, Cys-70, Cys-74, Cys-104, Cys-107, Cys-110, and Cys-114.

The protein belongs to the complex I 23 kDa subunit family. In terms of assembly, NDH is composed of at least 16 different subunits, 5 of which are encoded in the nucleus. [4Fe-4S] cluster serves as cofactor.

The protein localises to the plastid. Its subcellular location is the chloroplast thylakoid membrane. The enzyme catalyses a plastoquinone + NADH + (n+1) H(+)(in) = a plastoquinol + NAD(+) + n H(+)(out). It catalyses the reaction a plastoquinone + NADPH + (n+1) H(+)(in) = a plastoquinol + NADP(+) + n H(+)(out). Functionally, NDH shuttles electrons from NAD(P)H:plastoquinone, via FMN and iron-sulfur (Fe-S) centers, to quinones in the photosynthetic chain and possibly in a chloroplast respiratory chain. The immediate electron acceptor for the enzyme in this species is believed to be plastoquinone. Couples the redox reaction to proton translocation, and thus conserves the redox energy in a proton gradient. This Phoenix dactylifera (Date palm) protein is NAD(P)H-quinone oxidoreductase subunit I, chloroplastic (ndhI).